Here is a 356-residue protein sequence, read N- to C-terminus: Zinc finger protein 830 (356 aa).

Residues 11–33 adopt a coiled-coil conformation; the sequence is AQEELRKLMKAKQRESSSKKRIE. The C2H2-type zinc-finger motif lies at 47-69; the sequence is CVVCNSLIKSELLWPAHILGKQH. A disordered region spans residues 71 to 195; that stretch reads EKVAELKGTK…PTSSADNLPA (125 aa). Over residues 80-90 the composition is skewed to polar residues; it reads KATTSSPSNTI. Basic and acidic residues-rich tracts occupy residues 99 to 118 and 125 to 135; these read KGSE…EDHP and LPEEFFEKEKT. Positions 150–165 are enriched in acidic residues; that stretch reads DYEDVDDDDAEEGEEY. Residues 278-322 adopt a coiled-coil conformation; sequence AEEDEEGRLDRQIDEIDEQIQCYRRVEHLRDRKDTLQDAKMEVLK.

It is found in the nucleus. It localises to the chromosome. The protein resides in the nucleus speckle. May act as an important regulator of the cell cycle that participates in the maintenance of genome integrity. The protein is Zinc finger protein 830 of Xenopus laevis (African clawed frog).